Here is a 474-residue protein sequence, read N- to C-terminus: Probable CAAX prenyl protease 1 (474 aa).

Transmembrane regions (helical) follow at residues 103 to 123 (SWFS…IIKY), 196 to 216 (IFVI…SVVV), and 230 to 250 (FIMY…TIAP). Residue His-332 participates in Zn(2+) binding. The active site involves Glu-333. Residue His-336 participates in Zn(2+) binding. The next 2 membrane-spanning stretches (helical) occupy residues 344 to 364 (INTI…AAFI) and 381 to 401 (VIVG…ILTF). Zn(2+) is bound at residue Glu-411. The Proton donor role is filled by Asp-415.

It belongs to the peptidase M48A family. Zn(2+) serves as cofactor.

Its subcellular location is the endoplasmic reticulum membrane. It catalyses the reaction Hydrolyzes the peptide bond -P2-(S-farnesyl or geranylgeranyl)C-P1'-P2'-P3'-COOH where P1' and P2' are amino acids with aliphatic side chains and P3' is any C-terminal residue.. Proteolytically removes the C-terminal three residues of farnesylated proteins. This Schizosaccharomyces pombe (strain 972 / ATCC 24843) (Fission yeast) protein is Probable CAAX prenyl protease 1.